The following is a 235-amino-acid chain: Orotidine 5'-phosphate decarboxylase (235 aa).

Substrate contacts are provided by residues aspartate 12, lysine 34, 61-70 (DMKLLDIDNT), threonine 116, arginine 177, glutamine 186, glycine 206, and arginine 207. Lysine 63 (proton donor) is an active-site residue.

Belongs to the OMP decarboxylase family. Type 1 subfamily. Homodimer.

The catalysed reaction is orotidine 5'-phosphate + H(+) = UMP + CO2. The protein operates within pyrimidine metabolism; UMP biosynthesis via de novo pathway; UMP from orotate: step 2/2. Its function is as follows. Catalyzes the decarboxylation of orotidine 5'-monophosphate (OMP) to uridine 5'-monophosphate (UMP). This chain is Orotidine 5'-phosphate decarboxylase, found in Rhizobium johnstonii (strain DSM 114642 / LMG 32736 / 3841) (Rhizobium leguminosarum bv. viciae).